The primary structure comprises 193 residues: Large ribosomal subunit protein uL18 (193 aa).

Belongs to the universal ribosomal protein uL18 family. As to quaternary structure, part of the 50S ribosomal subunit. Contacts the 5S and 23S rRNAs.

In terms of biological role, this is one of the proteins that bind and probably mediate the attachment of the 5S RNA into the large ribosomal subunit, where it forms part of the central protuberance. In Methanococcus vannielii (strain ATCC 35089 / DSM 1224 / JCM 13029 / OCM 148 / SB), this protein is Large ribosomal subunit protein uL18.